The chain runs to 348 residues: Dihydroorotase (348 aa).

Positions 14 and 16 each coordinate Zn(2+). Residues His16–Arg18 and Asn42 each bind substrate. 3 residues coordinate Zn(2+): Lys100, His137, and His175. Position 100 is an N6-carboxylysine (Lys100). His137 contributes to the substrate binding site. Substrate is bound at residue Leu220. Asp248 contacts Zn(2+). Residue Asp248 is part of the active site. Residues His252 and Ala264 each coordinate substrate.

The protein belongs to the metallo-dependent hydrolases superfamily. DHOase family. Class II DHOase subfamily. As to quaternary structure, homodimer. Requires Zn(2+) as cofactor.

The catalysed reaction is (S)-dihydroorotate + H2O = N-carbamoyl-L-aspartate + H(+). The protein operates within pyrimidine metabolism; UMP biosynthesis via de novo pathway; (S)-dihydroorotate from bicarbonate: step 3/3. Functionally, catalyzes the reversible cyclization of carbamoyl aspartate to dihydroorotate. In Pseudomonas putida (strain ATCC 47054 / DSM 6125 / CFBP 8728 / NCIMB 11950 / KT2440), this protein is Dihydroorotase.